The sequence spans 421 residues: Protein OS-9 homolog (421 aa).

Positions 1–26 (MWRWSTGVRTMLGYAMCFLALGSALT) are cleaved as a signal peptide. The MRH domain maps to 99–220 (EEATVGKKLE…LVSIPSLCEL (122 aa)). W115 provides a ligand contact to a mannooligosaccharide derivative. N-linked (GlcNAc...) asparagine glycosylation occurs at N125. Intrachain disulfides connect C173–C206 and C188–C218. Positions 180, 202, and 208 each coordinate a mannooligosaccharide derivative. 2 N-linked (GlcNAc...) asparagine glycosylation sites follow: N271 and N332. Positions 375 to 394 (GNSEDYEQQAPEQLDEEEAE) are enriched in acidic residues. The tract at residues 375–403 (GNSEDYEQQAPEQLDEEEAELTSQSDDPA) is disordered.

The protein belongs to the OS-9 family. Interacts with missfolded ER lumenal proteins.

It localises to the endoplasmic reticulum membrane. Lectin involved in the quality control of the secretory pathway. As a member of the endoplasmic reticulum-associated degradation lumenal (ERAD-L) surveillance system, targets misfolded endoplasmic reticulum lumenal glycoproteins for degradation. The sequence is that of Protein OS-9 homolog (YOS9) from Eremothecium gossypii (strain ATCC 10895 / CBS 109.51 / FGSC 9923 / NRRL Y-1056) (Yeast).